The following is a 68-amino-acid chain: Large ribosomal subunit protein bL32 (68 aa).

Belongs to the bacterial ribosomal protein bL32 family.

This chain is Large ribosomal subunit protein bL32, found in Aster yellows witches'-broom phytoplasma (strain AYWB).